Reading from the N-terminus, the 349-residue chain is Anthranilate phosphoribosyltransferase (349 aa).

Residues Gly-87, 90-91, Thr-95, 97-100, 115-123, and Ser-127 each bind 5-phospho-alpha-D-ribose 1-diphosphate; these read GD, NIST, and KHGNRSVSS. Gly-87 contributes to the anthranilate binding site. Ser-99 contacts Mg(2+). Asn-118 contributes to the anthranilate binding site. Arg-173 lines the anthranilate pocket. The Mg(2+) site is built by Asp-231 and Glu-232.

This sequence belongs to the anthranilate phosphoribosyltransferase family. In terms of assembly, homodimer. Requires Mg(2+) as cofactor.

The enzyme catalyses N-(5-phospho-beta-D-ribosyl)anthranilate + diphosphate = 5-phospho-alpha-D-ribose 1-diphosphate + anthranilate. The protein operates within amino-acid biosynthesis; L-tryptophan biosynthesis; L-tryptophan from chorismate: step 2/5. In terms of biological role, catalyzes the transfer of the phosphoribosyl group of 5-phosphorylribose-1-pyrophosphate (PRPP) to anthranilate to yield N-(5'-phosphoribosyl)-anthranilate (PRA). The protein is Anthranilate phosphoribosyltransferase of Shewanella loihica (strain ATCC BAA-1088 / PV-4).